Consider the following 301-residue polypeptide: tRNA-cytidine(32) 2-sulfurtransferase (301 aa).

The PP-loop motif motif lies at 55–60 (SGGKDS). 3 residues coordinate [4Fe-4S] cluster: C130, C133, and C221.

It belongs to the TtcA family. As to quaternary structure, homodimer. Mg(2+) serves as cofactor. The cofactor is [4Fe-4S] cluster.

It localises to the cytoplasm. It carries out the reaction cytidine(32) in tRNA + S-sulfanyl-L-cysteinyl-[cysteine desulfurase] + AH2 + ATP = 2-thiocytidine(32) in tRNA + L-cysteinyl-[cysteine desulfurase] + A + AMP + diphosphate + H(+). It functions in the pathway tRNA modification. Its function is as follows. Catalyzes the ATP-dependent 2-thiolation of cytidine in position 32 of tRNA, to form 2-thiocytidine (s(2)C32). The sulfur atoms are provided by the cysteine/cysteine desulfurase (IscS) system. This Acinetobacter baylyi (strain ATCC 33305 / BD413 / ADP1) protein is tRNA-cytidine(32) 2-sulfurtransferase.